The following is a 149-amino-acid chain: Large ribosomal subunit protein bL9 (149 aa).

Belongs to the bacterial ribosomal protein bL9 family.

Functionally, binds to the 23S rRNA. This is Large ribosomal subunit protein bL9 from Edwardsiella ictaluri (strain 93-146).